Consider the following 189-residue polypeptide: uncharacterized protein (189 aa).

Residues 31 to 54 (KCENIDDLANRYEVSKQEVEKVFK) are a coiled coil. EF-hand domains follow at residues 47 to 82 (QEVE…LGID), 83 to 118 (VSPK…KIKL), 120 to 155 (TVKA…TVST), and 157 to 189 (ITVK…CQTV). Residues Asp60, Asp62, Ser64, Thr66, Glu71, Asp96, Ser98, Asp100, Gln102, Glu107, Asp133, Asn135, Glu137, and Glu144 each contribute to the Ca(2+) site.

This is an uncharacterized protein from Caenorhabditis elegans.